A 267-amino-acid chain; its full sequence is 2-keto-3-deoxy-L-rhamnonate aldolase (267 aa).

The active-site Proton acceptor is the H49. Q151 lines the substrate pocket. E153 contacts Mg(2+). Substrate contacts are provided by A178 and D179. A Mg(2+)-binding site is contributed by D179.

Belongs to the HpcH/HpaI aldolase family. KDR aldolase subfamily. Homohexamer. Mg(2+) serves as cofactor.

It carries out the reaction 2-dehydro-3-deoxy-L-rhamnonate = (S)-lactaldehyde + pyruvate. Functionally, catalyzes the reversible retro-aldol cleavage of 2-keto-3-deoxy-L-rhamnonate (KDR) to pyruvate and lactaldehyde. This chain is 2-keto-3-deoxy-L-rhamnonate aldolase, found in Salmonella typhi.